Consider the following 408-residue polypeptide: Arginine biosynthesis bifunctional protein ArgJ (408 aa).

6 residues coordinate substrate: Thr156, Lys182, Thr193, Glu279, Asn403, and Thr408. Catalysis depends on Thr193, which acts as the Nucleophile.

Belongs to the ArgJ family. As to quaternary structure, heterotetramer of two alpha and two beta chains.

It is found in the cytoplasm. The enzyme catalyses N(2)-acetyl-L-ornithine + L-glutamate = N-acetyl-L-glutamate + L-ornithine. It carries out the reaction L-glutamate + acetyl-CoA = N-acetyl-L-glutamate + CoA + H(+). It participates in amino-acid biosynthesis; L-arginine biosynthesis; L-ornithine and N-acetyl-L-glutamate from L-glutamate and N(2)-acetyl-L-ornithine (cyclic): step 1/1. It functions in the pathway amino-acid biosynthesis; L-arginine biosynthesis; N(2)-acetyl-L-ornithine from L-glutamate: step 1/4. In terms of biological role, catalyzes two activities which are involved in the cyclic version of arginine biosynthesis: the synthesis of N-acetylglutamate from glutamate and acetyl-CoA as the acetyl donor, and of ornithine by transacetylation between N(2)-acetylornithine and glutamate. This is Arginine biosynthesis bifunctional protein ArgJ from Methylococcus capsulatus (strain ATCC 33009 / NCIMB 11132 / Bath).